Here is an 88-residue protein sequence, read N- to C-terminus: Phosphocarrier protein HPr (88 aa).

One can recognise an HPr domain in the interval 1 to 88 (MEQASFVVID…EVLKKEGLAE (88 aa)). Catalysis depends on His15, which acts as the Pros-phosphohistidine intermediate. At Ser46 the chain carries Phosphoserine; by HPrK/P.

Belongs to the HPr family.

It localises to the cytoplasm. With respect to regulation, phosphorylation on Ser-46 inhibits the phosphoryl transfer from enzyme I to HPr. General (non sugar-specific) component of the phosphoenolpyruvate-dependent sugar phosphotransferase system (sugar PTS). This major carbohydrate active-transport system catalyzes the phosphorylation of incoming sugar substrates concomitantly with their translocation across the cell membrane. The phosphoryl group from phosphoenolpyruvate (PEP) is transferred to the phosphoryl carrier protein HPr by enzyme I. Phospho-HPr then transfers it to the PTS EIIA domain. Its function is as follows. P-Ser-HPr interacts with the catabolite control protein A (CcpA), forming a complex that binds to DNA at the catabolite response elements cre, operator sites preceding a large number of catabolite-regulated genes. Thus, P-Ser-HPr is a corepressor in carbon catabolite repression (CCR), a mechanism that allows bacteria to coordinate and optimize the utilization of available carbon sources. P-Ser-HPr also plays a role in inducer exclusion, in which it probably interacts with several non-PTS permeases and inhibits their transport activity. In Listeria monocytogenes serovar 1/2a (strain ATCC BAA-679 / EGD-e), this protein is Phosphocarrier protein HPr (ptsH).